The primary structure comprises 1070 residues: MLRDGNEGMSTIPGSSQIQFEGFCKFIDQGLAEELHKFPKMEDTDQEMEFQLFVETYQLVEPLIKERDAVYESLTYSSELYVSAGLIWRAGRDMRKQTVFIGNIPLMNSLGTSLVNGIYRIVVNQILQSPGIYYRSELDHNGISVYTGTIISDWGGRSELEIDRKARIWARVSRKQKISILVPSSAMGSNLRDILDNVCYPEIFLSFPNDKEKKKIGSKENAVLEFYQQFACVGGDPVFSESLCKELQKKFFQQRCELGRIGRRNMNQRLNLDIPQNSTFLLPRDVLAAADHLIGMKFGMGTLDDLNHLKNKRIRSVADLLQDQFGLALVRLENVVRGTICGAIRHKLIPTPHNLVTSTPLTTTYESFFGLHPLSQVLDRTNPLTQIVHGRKWSYLGPGGLTGRTASFRIRDIHPSHYGRICPIDTSEGINVGLIGSLAIHARIGDWGSIESPFYEISERLKEEQMVYLSPRRDEYYMVAAGNSLALNRGIQEEQVVPARYRQEFLTIAWEQIHLRSIYPFQYFSIGASLIPFIEHNDANRALMSSNMQRQAVPLSHSEKCIVGTGLERQAALDSGGSAIAEHEGKITYTDTEKIVLSGNGDTISIPLVMYQRSNKNTCMHQKPQVHRGKCVKKGQILADGAAIIGGELALGKNILVAYMPWEGYNSEDAVLISERLVYGDIYTSFHIRKYEIQTHVTSQGPERITNEIPHLEAHLLRNLDKNGIVMLGSWVETGDILVGKLTPQTAKESSYAPEDRLLRAILGIQVSTAKETCLKLPIGGRGRVIDVRWIQKKRGSSSNPETIRVYISQKREIKVGDKVAGRHGNKGIISKILPRQDMPYLQDGTPVDMVFNPLGIPSRMNVGQMFECSIGLAGNLLNRHYRIIPFDERYEQEASRKLVFPELYKASKQTANPWVFEPEYPGKSRIFDGRTGDPFEQPVIIGKSYMMKLIHQVDDKIHGRSSGHYALVTQQPLRGRAKHGGQRVGEMEVWALEGFGVAHISQEMLTYKSDHIRARQEVLGTTIIGGTIPNPDGAPESFRLLVRELRSLALELNHFLVSEKSFQINRKEA.

Belongs to the RNA polymerase beta chain family. As to quaternary structure, in plastids the minimal PEP RNA polymerase catalytic core is composed of four subunits: alpha, beta, beta', and beta''. When a (nuclear-encoded) sigma factor is associated with the core the holoenzyme is formed, which can initiate transcription.

Its subcellular location is the plastid. It is found in the chloroplast. It catalyses the reaction RNA(n) + a ribonucleoside 5'-triphosphate = RNA(n+1) + diphosphate. DNA-dependent RNA polymerase catalyzes the transcription of DNA into RNA using the four ribonucleoside triphosphates as substrates. This Illicium oligandrum (Star anise) protein is DNA-directed RNA polymerase subunit beta.